The chain runs to 414 residues: L-cysteine:1D-myo-inositol 2-amino-2-deoxy-alpha-D-glucopyranoside ligase (414 aa).

C43 is a binding site for Zn(2+). Residues C43–T46, T58, and N81–T83 contribute to the L-cysteinyl-5'-AMP site. The 'HIGH' region motif lies at I45–H55. The short motif at E187–P192 is the 'ERGGDP' region element. Residue W227 participates in L-cysteinyl-5'-AMP binding. Residue C231 coordinates Zn(2+). Position 249–251 (G249–D251) interacts with L-cysteinyl-5'-AMP. H256 is a binding site for Zn(2+). An L-cysteinyl-5'-AMP-binding site is contributed by I283. The short motif at K289–S293 is the 'KMSKS' region element.

Belongs to the class-I aminoacyl-tRNA synthetase family. MshC subfamily. As to quaternary structure, monomer. Zn(2+) serves as cofactor.

The enzyme catalyses 1D-myo-inositol 2-amino-2-deoxy-alpha-D-glucopyranoside + L-cysteine + ATP = 1D-myo-inositol 2-(L-cysteinylamino)-2-deoxy-alpha-D-glucopyranoside + AMP + diphosphate + H(+). Catalyzes the ATP-dependent condensation of GlcN-Ins and L-cysteine to form L-Cys-GlcN-Ins. This is L-cysteine:1D-myo-inositol 2-amino-2-deoxy-alpha-D-glucopyranoside ligase from Tsukamurella paurometabola (strain ATCC 8368 / DSM 20162 / CCUG 35730 / CIP 100753 / JCM 10117 / KCTC 9821 / NBRC 16120 / NCIMB 702349 / NCTC 13040) (Corynebacterium paurometabolum).